Consider the following 474-residue polypeptide: MLTTGKKEFWFVVGSQHLYGEETLAEVRAHAQAMTDALNESAVLPYPLVLQDLAVNADKITSIMKEVNYRDEVAGVITWMHTFSPAKMWIRGTKLLQKPLLHLATQFNESIPWPTIDMDFMNLNQSAHGDREYGFINARLKKQNKVVVGYWERPEVQQQIAEWMDVAVAYNESFNIKVARFGDNMRNVAVTEGDKIEAQIQFGWTVDYFGIGDLVQYVNAVTDEEINRLFAEYADLYEFDYGTYSREDWEKSVKVQASYEIAIKRFLDDGGYNAFTTNFEDLYGMKQLPGLAVQRLMAQGYGFAGEGDWKTAALDRLLKVMSRNQSTGFMEDYTYELAAGQESILQSHMLEVDPSLASNKPKIIVSPLGIGDREDPARLVFDGKAGDGVVVSMADFGTHYKLLINEVSAFEPTVPAPNLPVARVLWEVKPNFQDGVKAWLENGGGHHTVVSLFLTTDQMITYAKLVDLEYVVIK.

The Mn(2+) site is built by Glu-306, Glu-331, His-348, and His-447.

This sequence belongs to the arabinose isomerase family. The cofactor is Mn(2+).

It catalyses the reaction beta-L-arabinopyranose = L-ribulose. Its pathway is carbohydrate degradation; L-arabinose degradation via L-ribulose; D-xylulose 5-phosphate from L-arabinose (bacterial route): step 1/3. Its function is as follows. Catalyzes the conversion of L-arabinose to L-ribulose. In Bacillus licheniformis (strain ATCC 14580 / DSM 13 / JCM 2505 / CCUG 7422 / NBRC 12200 / NCIMB 9375 / NCTC 10341 / NRRL NRS-1264 / Gibson 46), this protein is L-arabinose isomerase 2.